We begin with the raw amino-acid sequence, 293 residues long: Kallikrein-5 (293 aa).

An N-terminal signal peptide occupies residues 1–22 (MATARPPWMWVLCALITALLLG). The segment covering 37–49 (HPSNTVPSGSNQD) has biased composition (polar residues). Residues 37 to 68 (HPSNTVPSGSNQDLGAGAGEDARSDDSSSRII) are disordered. Positions 67-290 (IINGSDCDMH…FTKWIQETIQ (224 aa)) constitute a Peptidase S1 domain. An N-linked (GlcNAc...) asparagine glycan is attached at Asn-69. 6 disulfide bridges follow: Cys-73–Cys-206, Cys-93–Cys-109, Cys-178–Cys-279, Cys-185–Cys-251, Cys-217–Cys-231, and Cys-241–Cys-266. Catalysis depends on charge relay system residues His-108 and Asp-153. Asn-173 and Asn-208 each carry an N-linked (GlcNAc...) asparagine glycan. Residue Ser-245 is the Charge relay system of the active site. Residue Asn-252 is glycosylated (N-linked (GlcNAc...) asparagine).

Belongs to the peptidase S1 family. Kallikrein subfamily. Interacts with SPINK9. As to expression, expressed in skin, breast, brain and testis. Expressed at the stratum granulosum of palmar skin.

The protein resides in the secreted. Its activity is regulated as follows. Inhibited by Zn2+. Functionally, may be involved in desquamation. In Homo sapiens (Human), this protein is Kallikrein-5.